The following is a 141-amino-acid chain: Nucleoside diphosphate kinase (141 aa).

ATP is bound by residues Lys-11, Phe-59, Arg-87, Thr-93, Arg-104, and Asn-114. His-117 functions as the Pros-phosphohistidine intermediate in the catalytic mechanism.

Belongs to the NDK family. Homotetramer. Mg(2+) serves as cofactor.

The protein localises to the cytoplasm. It catalyses the reaction a 2'-deoxyribonucleoside 5'-diphosphate + ATP = a 2'-deoxyribonucleoside 5'-triphosphate + ADP. The catalysed reaction is a ribonucleoside 5'-diphosphate + ATP = a ribonucleoside 5'-triphosphate + ADP. In terms of biological role, major role in the synthesis of nucleoside triphosphates other than ATP. The ATP gamma phosphate is transferred to the NDP beta phosphate via a ping-pong mechanism, using a phosphorylated active-site intermediate. In Methylibium petroleiphilum (strain ATCC BAA-1232 / LMG 22953 / PM1), this protein is Nucleoside diphosphate kinase.